A 168-amino-acid polypeptide reads, in one-letter code: Auxin-responsive protein IAA1 (168 aa).

A disordered region spans residues 1-74 (MEVTNGLNLK…NRKNNNNKNV (74 aa)). The short motif at 14 to 18 (LRLGL) is the EAR-like (transcriptional repression) element. Residues 23-34 (EEQQLELSCVRS) are compositionally biased toward polar residues. A PB1 domain is found at 74–161 (VSYVKVSMDG…SCQKLRIMKG (88 aa)).

It belongs to the Aux/IAA family. Homodimers and heterodimers. Interacts with the auxin-responsive protein IAA2. Interacts with TPL. Post-translationally, phosphorylated by phytochrome A in vitro. Preferentially expressed in stems, leaves and flowers.

The protein localises to the nucleus. Functionally, aux/IAA proteins are short-lived transcriptional factors that function as repressors of early auxin response genes at low auxin concentrations. Repression is thought to result from the interaction with auxin response factors (ARFs), proteins that bind to the auxin-responsive promoter element (AuxRE). Formation of heterodimers with ARF proteins may alter their ability to modulate early auxin response genes expression. The polypeptide is Auxin-responsive protein IAA1 (IAA1) (Arabidopsis thaliana (Mouse-ear cress)).